Reading from the N-terminus, the 425-residue chain is CDP-diacylglycerol--serine O-phosphatidyltransferase 1 (425 aa).

The span at 1–16 shows a compositional bias: basic and acidic residues; that stretch reads MEPNGYRKERRKEQHL. Positions 1 to 23 are disordered; that stretch reads MEPNGYRKERRKEQHLGRMNGGG. 9 helical membrane-spanning segments follow: residues 42 to 62, 79 to 99, 105 to 125, 197 to 217, 227 to 247, 296 to 316, 321 to 341, 361 to 381, and 390 to 410; these read TISL…ALDP, WAMI…TVLI, IWRL…FLLF, PLLW…RHML, SIVL…MYTV, FIQV…TFFL, WIPP…LIAI, GAFC…CIKF, and MPLW…AFLL.

This sequence belongs to the CDP-alcohol phosphatidyltransferase class-I family. Expressed in trichomes, leaf veins and root vasculature.

The protein resides in the endoplasmic reticulum membrane. The protein localises to the nucleus envelope. It catalyses the reaction a CDP-1,2-diacyl-sn-glycerol + L-serine = a 1,2-diacyl-sn-glycero-3-phospho-L-serine + CMP + H(+). It functions in the pathway phospholipid metabolism; phosphatidylethanolamine biosynthesis; phosphatidylethanolamine from CDP-diacylglycerol: step 1/2. Its function is as follows. Catalyzes a base-exchange reaction in which the polar head group of phosphatidylethanolamine (PE) or phosphatidylcholine (PC) is replaced by L-serine. Is essential for phosphatidylserine (PS) biosynthesis and PE seems to be the most plausible substrate. Plays an important role in microspore maturation. The polypeptide is CDP-diacylglycerol--serine O-phosphatidyltransferase 1 (PSS1) (Arabidopsis thaliana (Mouse-ear cress)).